A 277-amino-acid chain; its full sequence is uncharacterized protein (277 aa).

5 helical membrane passes run 46-66, 73-93, 143-163, 174-194, and 228-248; these read IAAIAAGFAIATAVIVAYGGL, LFEGFASYLAVGVLTYMILWM, TTVIGASAGAAVAITLAVLIL, FFYATSVLLAFIAAGLLGYGT, and KGLIGGILAVMFGYSASMEWV.

Belongs to the oxidase-dependent Fe transporter (OFeT) (TC 9.A.10.1) family.

Its subcellular location is the cell membrane. This is an uncharacterized protein from Archaeoglobus fulgidus (strain ATCC 49558 / DSM 4304 / JCM 9628 / NBRC 100126 / VC-16).